Reading from the N-terminus, the 388-residue chain is Pepsin F (388 aa).

The signal sequence occupies residues Met-1–Cys-15. A propeptide spans Leu-16 to Asp-58 (activation peptide). A Peptidase A1 domain is found at Tyr-74–Ala-385. The active site involves Asp-92. 2 disulfides stabilise this stretch: Cys-105–Cys-110 and Cys-266–Cys-270. Residue Asp-275 is part of the active site. Cys-309 and Cys-343 are disulfide-bonded.

This sequence belongs to the peptidase A1 family.

The protein resides in the secreted. The enzyme catalyses Preferential cleavage: hydrophobic, preferably aromatic, residues in P1 and P1' positions. Cleaves 1-Phe-|-Val-2, 4-Gln-|-His-5, 13-Glu-|-Ala-14, 14-Ala-|-Leu-15, 15-Leu-|-Tyr-16, 16-Tyr-|-Leu-17, 23-Gly-|-Phe-24, 24-Phe-|-Phe-25 and 25-Phe-|-Tyr-26 bonds in the B chain of insulin.. Functionally, shows particularly broad specificity; although bonds involving phenylalanine and leucine are preferred, many others are also cleaved to some extent. The polypeptide is Pepsin F (Oryctolagus cuniculus (Rabbit)).